Here is a 64-residue protein sequence, read N- to C-terminus: Conotoxin Pn-B01121 (64 aa).

The first 22 residues, 1 to 22 (MCCLPVFVILLLLIASAPSVDA), serve as a signal peptide directing secretion. Positions 23-48 (LPKTKDDMSLASFHDNAKRTLQILSN) are excised as a propeptide. A Tryptophan amide modification is found at Trp63.

The protein belongs to the conotoxin T superfamily. In terms of processing, contains 2 disulfide bonds that can be either 'C1-C3, C2-C4' or 'C1-C4, C2-C3', since these disulfide connectivities have been observed for conotoxins with cysteine framework V (for examples, see AC P0DQQ7 and AC P81755). Expressed by the venom duct.

Its subcellular location is the secreted. This is Conotoxin Pn-B01121 from Conus pennaceus (Feathered cone).